Here is a 288-residue protein sequence, read N- to C-terminus: Bifunctional protein FolD (288 aa).

Residues 166–168 (GAS) and Ile232 contribute to the NADP(+) site.

The protein belongs to the tetrahydrofolate dehydrogenase/cyclohydrolase family. In terms of assembly, homodimer.

It carries out the reaction (6R)-5,10-methylene-5,6,7,8-tetrahydrofolate + NADP(+) = (6R)-5,10-methenyltetrahydrofolate + NADPH. The enzyme catalyses (6R)-5,10-methenyltetrahydrofolate + H2O = (6R)-10-formyltetrahydrofolate + H(+). It functions in the pathway one-carbon metabolism; tetrahydrofolate interconversion. Catalyzes the oxidation of 5,10-methylenetetrahydrofolate to 5,10-methenyltetrahydrofolate and then the hydrolysis of 5,10-methenyltetrahydrofolate to 10-formyltetrahydrofolate. The chain is Bifunctional protein FolD from Shigella dysenteriae serotype 1 (strain Sd197).